The chain runs to 1057 residues: Carbamoyl phosphate synthase large chain (1057 aa).

The interval 1 to 401 (MPKRDDIKTI…SLLKAIRSLE (401 aa)) is carboxyphosphate synthetic domain. Arginine 129, arginine 169, glycine 175, glycine 176, lysine 208, isoleucine 210, glutamate 215, glycine 241, isoleucine 242, histidine 243, glutamine 284, and glutamate 298 together coordinate ATP. Positions 133–327 (RTLMNDLNVP…IAKLAAKIAV (195 aa)) constitute an ATP-grasp 1 domain. Mg(2+) is bound by residues glutamine 284, glutamate 298, and asparagine 300. The Mn(2+) site is built by glutamine 284, glutamate 298, and asparagine 300. An oligomerization domain region spans residues 402 to 546 (YGVHHLGLSN…YGTYEYENES (145 aa)). The interval 547–929 (IVTDKEKILV…ALYKGLTGSG (383 aa)) is carbamoyl phosphate synthetic domain. The ATP-grasp 2 domain maps to 671–861 (EALLREIAVP…MAQLAMRAIM (191 aa)). 10 residues coordinate ATP: arginine 707, arginine 746, leucine 748, glutamate 752, glycine 777, valine 778, histidine 779, serine 780, glutamine 820, and glutamate 832. The Mg(2+) site is built by glutamine 820, glutamate 832, and asparagine 834. Mn(2+) contacts are provided by glutamine 820, glutamate 832, and asparagine 834. The MGS-like domain maps to 930–1057 (FEVKDHGTVL…ESMTFTMRNV (128 aa)). An allosteric domain region spans residues 930–1057 (FEVKDHGTVL…ESMTFTMRNV (128 aa)).

It belongs to the CarB family. As to quaternary structure, composed of two chains; the small (or glutamine) chain promotes the hydrolysis of glutamine to ammonia, which is used by the large (or ammonia) chain to synthesize carbamoyl phosphate. Tetramer of heterodimers (alpha,beta)4. Mg(2+) serves as cofactor. Requires Mn(2+) as cofactor.

The catalysed reaction is hydrogencarbonate + L-glutamine + 2 ATP + H2O = carbamoyl phosphate + L-glutamate + 2 ADP + phosphate + 2 H(+). It catalyses the reaction hydrogencarbonate + NH4(+) + 2 ATP = carbamoyl phosphate + 2 ADP + phosphate + 2 H(+). Its pathway is amino-acid biosynthesis; L-arginine biosynthesis; carbamoyl phosphate from bicarbonate: step 1/1. It functions in the pathway pyrimidine metabolism; UMP biosynthesis via de novo pathway; (S)-dihydroorotate from bicarbonate: step 1/3. Large subunit of the glutamine-dependent carbamoyl phosphate synthetase (CPSase). CPSase catalyzes the formation of carbamoyl phosphate from the ammonia moiety of glutamine, carbonate, and phosphate donated by ATP, constituting the first step of 2 biosynthetic pathways, one leading to arginine and/or urea and the other to pyrimidine nucleotides. The large subunit (synthetase) binds the substrates ammonia (free or transferred from glutamine from the small subunit), hydrogencarbonate and ATP and carries out an ATP-coupled ligase reaction, activating hydrogencarbonate by forming carboxy phosphate which reacts with ammonia to form carbamoyl phosphate. The polypeptide is Carbamoyl phosphate synthase large chain (Staphylococcus epidermidis (strain ATCC 12228 / FDA PCI 1200)).